A 161-amino-acid chain; its full sequence is N5-carboxyaminoimidazole ribonucleotide mutase (161 aa).

3 residues coordinate substrate: S9, D12, and R39.

Belongs to the AIR carboxylase family. Class I subfamily.

It carries out the reaction 5-carboxyamino-1-(5-phospho-D-ribosyl)imidazole + H(+) = 5-amino-1-(5-phospho-D-ribosyl)imidazole-4-carboxylate. The protein operates within purine metabolism; IMP biosynthesis via de novo pathway; 5-amino-1-(5-phospho-D-ribosyl)imidazole-4-carboxylate from 5-amino-1-(5-phospho-D-ribosyl)imidazole (N5-CAIR route): step 2/2. Its function is as follows. Catalyzes the conversion of N5-carboxyaminoimidazole ribonucleotide (N5-CAIR) to 4-carboxy-5-aminoimidazole ribonucleotide (CAIR). The polypeptide is N5-carboxyaminoimidazole ribonucleotide mutase (Vibrio cholerae serotype O1 (strain ATCC 39315 / El Tor Inaba N16961)).